Consider the following 132-residue polypeptide: Ribosome-binding factor A (132 aa).

This sequence belongs to the RbfA family. Monomer. Binds 30S ribosomal subunits, but not 50S ribosomal subunits or 70S ribosomes.

The protein resides in the cytoplasm. One of several proteins that assist in the late maturation steps of the functional core of the 30S ribosomal subunit. Associates with free 30S ribosomal subunits (but not with 30S subunits that are part of 70S ribosomes or polysomes). Required for efficient processing of 16S rRNA. May interact with the 5'-terminal helix region of 16S rRNA. The sequence is that of Ribosome-binding factor A from Burkholderia multivorans (strain ATCC 17616 / 249).